Consider the following 442-residue polypeptide: GTPase HflX (442 aa).

One can recognise a Hflx-type G domain in the interval 186–362 (VLVALAGYTN…ALNRVVLKLP (177 aa)). Residues 192–199 (GYTNAGKS), 217–221 (FTTLD), 238–241 (DTVG), 306–309 (NKID), and 341–343 (SAR) contribute to the GTP site. Residues Ser199 and Thr219 each coordinate Mg(2+).

The protein belongs to the TRAFAC class OBG-HflX-like GTPase superfamily. HflX GTPase family. As to quaternary structure, monomer. Associates with the 50S ribosomal subunit. Mg(2+) serves as cofactor.

Its subcellular location is the cytoplasm. In terms of biological role, GTPase that associates with the 50S ribosomal subunit and may have a role during protein synthesis or ribosome biogenesis. This is GTPase HflX from Thermococcus kodakarensis (strain ATCC BAA-918 / JCM 12380 / KOD1) (Pyrococcus kodakaraensis (strain KOD1)).